The following is a 157-amino-acid chain: Thiocyanate hydrolase subunit beta (157 aa).

As to quaternary structure, heterododecamer consisting of 4 alpha, 4 beta, and 4 gamma subunits.

The catalysed reaction is thiocyanate + H2O + 2 H(+) = carbonyl sulfide + NH4(+). It functions in the pathway organosulfur degradation; thiocyanate degradation. Functionally, involved in the degradation of thiocyanate. The protein is Thiocyanate hydrolase subunit beta (scnB) of Thiobacillus thioparus.